Consider the following 91-residue polypeptide: Small ribosomal subunit protein uS19 (91 aa).

It belongs to the universal ribosomal protein uS19 family.

Protein S19 forms a complex with S13 that binds strongly to the 16S ribosomal RNA. The chain is Small ribosomal subunit protein uS19 from Metamycoplasma hominis (strain ATCC 23114 / DSM 25592 / NBRC 14850 / NCTC 10111 / PG21) (Mycoplasma hominis).